The following is a 189-amino-acid chain: Flavin prenyltransferase UbiX (189 aa).

Residues 10-12 (GAS), Ser36, 91-94 (STNT), and Arg126 each bind FMN. Dimethylallyl phosphate is bound by residues Tyr156 and Lys172.

This sequence belongs to the UbiX/PAD1 family.

It catalyses the reaction dimethylallyl phosphate + FMNH2 = prenylated FMNH2 + phosphate. Functionally, flavin prenyltransferase that catalyzes the synthesis of the prenylated FMN cofactor (prenyl-FMN) for 4-hydroxy-3-polyprenylbenzoic acid decarboxylase UbiD. The prenyltransferase is metal-independent and links a dimethylallyl moiety from dimethylallyl monophosphate (DMAP) to the flavin N5 and C6 atoms of FMN. This chain is Flavin prenyltransferase UbiX, found in Aquifex aeolicus (strain VF5).